Here is a 745-residue protein sequence, read N- to C-terminus: MTSNFSSTVAGLPRIGAKRELKFALEGYWNGSIEGRELAQTARQLVNTASDSLSGLDSVPFAGRSYYDAMLDTAAILGVLPERFDDIADHENDGLPLWIDRYFGAARGTETLPAQAMTKWFDTNYHYLVPELSADTRFVLDASALIEDLRCQQVRGVNARPVLVGPLTFLSLARTTDGSNPLDHLPALFEVYERLIKSFDTEWVQIDEPALVTDVAPEVLEQVRAGYTTLAKRGGVFVNTYFGSGDQALNTLAGIGLGAIGVDLVTHGVTELAAWKGEELLVAGIVDGRNIWRTDLCAALASLKRLAARGPIAVSTSCSLLHVPYTLEAENIEPEVRDWLAFGSEKITEVKLLADALAGNIDAAAFDAASAAIASRRTSPRTAPITQELPGRSRGSFNTRVTLQEKSLELPALPTTTIGSFPQTPSIRSARARLRKESITLEQYEEAMREEIDLVIAKQEELGLDVLVHGEPERNDMVQYFSELLDGFLSTANGWVQSYGSRCVRPPVLFGNVSRPAPMTVKWFQYAQSLTQKHVKGMLTGPVTILAWSFVRDDQPLATTADQVALALRDEINDLIEAGAKIIQVDEPAIRELLPLRDVDKPAYLQWSVDSFRLATAGAPDDVQIHTHMCYSEFNEVISSVIALDADVTTIEAARSDMQVLAALKSSGFELGVGPGVWDIHSPRVPSAQEVDGLLEAALQSVDPRQLWVNPDCGLKTRGWPEVEASLKVLVESAKQAREKIGATI.

Residues 19–22 and Lys119 each bind 5-methyltetrahydropteroyltri-L-glutamate; that span reads RELK. L-homocysteine-binding positions include 418–420 and Glu471; that span reads IGS. L-methionine-binding positions include 418 to 420 and Glu471; that span reads IGS. Residues 502–503 and Trp548 each bind 5-methyltetrahydropteroyltri-L-glutamate; that span reads RC. Asp586 provides a ligand contact to L-homocysteine. Asp586 lines the L-methionine pocket. Glu592 is a binding site for 5-methyltetrahydropteroyltri-L-glutamate. The Zn(2+) site is built by His628, Cys630, and Glu652. Catalysis depends on His681, which acts as the Proton donor. Cys713 lines the Zn(2+) pocket.

It belongs to the vitamin-B12 independent methionine synthase family. Zn(2+) is required as a cofactor.

It catalyses the reaction 5-methyltetrahydropteroyltri-L-glutamate + L-homocysteine = tetrahydropteroyltri-L-glutamate + L-methionine. Its pathway is amino-acid biosynthesis; L-methionine biosynthesis via de novo pathway; L-methionine from L-homocysteine (MetE route): step 1/1. Its function is as follows. Catalyzes the transfer of a methyl group from 5-methyltetrahydrofolate to homocysteine resulting in methionine formation. This chain is 5-methyltetrahydropteroyltriglutamate--homocysteine methyltransferase, found in Corynebacterium glutamicum (strain R).